A 444-amino-acid chain; its full sequence is Trigger factor (444 aa).

A PPIase FKBP-type domain is found at 160 to 245; the sequence is DMQVTFDFEG…VKQVEKPKLP (86 aa).

Belongs to the FKBP-type PPIase family. Tig subfamily.

It is found in the cytoplasm. The catalysed reaction is [protein]-peptidylproline (omega=180) = [protein]-peptidylproline (omega=0). Involved in protein export. Acts as a chaperone by maintaining the newly synthesized protein in an open conformation. Functions as a peptidyl-prolyl cis-trans isomerase. The chain is Trigger factor from Acinetobacter baylyi (strain ATCC 33305 / BD413 / ADP1).